The sequence spans 75 residues: Putative membrane protein insertion efficiency factor (75 aa).

Belongs to the UPF0161 family.

Its subcellular location is the cell inner membrane. Functionally, could be involved in insertion of integral membrane proteins into the membrane. The polypeptide is Putative membrane protein insertion efficiency factor (Leptospira biflexa serovar Patoc (strain Patoc 1 / ATCC 23582 / Paris)).